We begin with the raw amino-acid sequence, 237 residues long: Uridylate kinase (237 aa).

An ATP-binding site is contributed by 9–12 (KLSG). Glycine 51 is a binding site for UMP. ATP is bound by residues glycine 52 and arginine 56. UMP-binding positions include aspartate 71 and 132–139 (CGNPFFTT). Positions 159, 165, and 168 each coordinate ATP.

This sequence belongs to the UMP kinase family. Homohexamer.

It localises to the cytoplasm. The enzyme catalyses UMP + ATP = UDP + ADP. It functions in the pathway pyrimidine metabolism; CTP biosynthesis via de novo pathway; UDP from UMP (UMPK route): step 1/1. Its activity is regulated as follows. Inhibited by UTP. Its function is as follows. Catalyzes the reversible phosphorylation of UMP to UDP. In Prochlorococcus marinus (strain SARG / CCMP1375 / SS120), this protein is Uridylate kinase.